Reading from the N-terminus, the 312-residue chain is Malate dehydrogenase (312 aa).

Residues Gly7 to Gly13 and Asp34 each bind NAD(+). Substrate is bound by residues Arg81 and Arg87. NAD(+) contacts are provided by residues Asn94 and Ile117–Asn119. Substrate is bound by residues Asn119 and Arg153. The Proton acceptor role is filled by His177. Met227 is an NAD(+) binding site.

It belongs to the LDH/MDH superfamily. MDH type 1 family. Homodimer.

It carries out the reaction (S)-malate + NAD(+) = oxaloacetate + NADH + H(+). In terms of biological role, catalyzes the reversible oxidation of malate to oxaloacetate. This is Malate dehydrogenase from Serratia proteamaculans (strain 568).